Here is a 637-residue protein sequence, read N- to C-terminus: Poly(A) polymerase beta (637 aa).

Over residues methionine 1–glycine 10 the composition is skewed to low complexity. The tract at residues methionine 1–valine 23 is disordered. Residues phenylalanine 101–serine 103, threonine 110, aspartate 114–aspartate 116, aspartate 168, lysine 229, tyrosine 238, and glycine 247–valine 248 each bind ATP. Mg(2+) is bound by residues aspartate 114, aspartate 116, and aspartate 168. Residues serine 535–arginine 555 form a disordered region.

This sequence belongs to the poly(A) polymerase family. As to quaternary structure, interacts with GSG1. Requires Mg(2+) as cofactor. It depends on Mn(2+) as a cofactor. As to expression, testis specific.

It is found in the nucleus. The catalysed reaction is RNA(n) + ATP = RNA(n)-3'-adenine ribonucleotide + diphosphate. The protein is Poly(A) polymerase beta of Homo sapiens (Human).